A 237-amino-acid chain; its full sequence is Ribose-5-phosphate isomerase A (237 aa).

Residues T33 to T36, D90 to D93, and K103 to G106 contribute to the substrate site. E112 serves as the catalytic Proton acceptor. K130 is a binding site for substrate.

Belongs to the ribose 5-phosphate isomerase family. Homodimer.

The enzyme catalyses aldehydo-D-ribose 5-phosphate = D-ribulose 5-phosphate. It functions in the pathway carbohydrate degradation; pentose phosphate pathway; D-ribose 5-phosphate from D-ribulose 5-phosphate (non-oxidative stage): step 1/1. Catalyzes the reversible conversion of ribose-5-phosphate to ribulose 5-phosphate. This chain is Ribose-5-phosphate isomerase A, found in Trichodesmium erythraeum (strain IMS101).